The following is a 76-amino-acid chain: DNA-directed RNA polymerase subunit omega (76 aa).

The protein belongs to the RNA polymerase subunit omega family. As to quaternary structure, in cyanobacteria the RNAP catalytic core is composed of 2 alpha, 1 beta, 1 beta', 1 gamma and 1 omega subunit. When a sigma factor is associated with the core the holoenzyme is formed, which can initiate transcription.

The catalysed reaction is RNA(n) + a ribonucleoside 5'-triphosphate = RNA(n+1) + diphosphate. Promotes RNA polymerase assembly. Latches the N- and C-terminal regions of the beta' subunit thereby facilitating its interaction with the beta and alpha subunits. The protein is DNA-directed RNA polymerase subunit omega (rpoZ) of Synechocystis sp. (strain ATCC 27184 / PCC 6803 / Kazusa).